Consider the following 344-residue polypeptide: DNA-directed RNA polymerase subunit alpha (344 aa).

An alpha N-terminal domain (alpha-NTD) region spans residues 1 to 238 (MKVIKTAPLI…KQLGVFGEKP (238 aa)). An alpha C-terminal domain (alpha-CTD) region spans residues 253–344 (DAKDLSAKIE…EKLEDKGGND (92 aa)).

Belongs to the RNA polymerase alpha chain family. As to quaternary structure, homodimer. The RNAP catalytic core consists of 2 alpha, 1 beta, 1 beta' and 1 omega subunit. When a sigma factor is associated with the core the holoenzyme is formed, which can initiate transcription.

It carries out the reaction RNA(n) + a ribonucleoside 5'-triphosphate = RNA(n+1) + diphosphate. Functionally, DNA-dependent RNA polymerase catalyzes the transcription of DNA into RNA using the four ribonucleoside triphosphates as substrates. In Helicobacter acinonychis (strain Sheeba), this protein is DNA-directed RNA polymerase subunit alpha.